The sequence spans 59 residues: UPF0181 protein CKO_01169 (59 aa).

Belongs to the UPF0181 family.

The sequence is that of UPF0181 protein CKO_01169 from Citrobacter koseri (strain ATCC BAA-895 / CDC 4225-83 / SGSC4696).